A 473-amino-acid polypeptide reads, in one-letter code: MTVRTRFAPSPTGELHLGSIRTALYSWLFARKNNGEFILRIEDTDEERIKKISINNIIETMKLLGLNWDHGPYFQTKKLEKYNIIAKEMIYSGIAYKCYCSKNRINNLRIMQINKGEKPKYDGFCRNIEEKNIKNKRFVVRFSNPKNGYVIFNDLIRGTLKFKNSELDDLIILRSNKIPTYNFCSVIDDHDMNISHVIRGEDHINNTPRQINIFKALKIKCPKYAHISMILDKDRKKLSKKNQSTDVMKYIKNGFLPEALLNYLVRLGWSYGNQEIFNIDEMKKLFNLKSVGKSSCIFDINKLLWINQYYIQKLSDYDISSQIKKFFNKKEIDFNQGPKIENLIKIFKKKSRTLKEIFNQILFFYEDFSKVNFDLIKKYFTIDTNVHLKIFCKKLEKTSLWSVEEIKNTFFCTIKELNFNIKKIAMPIRIILSGSEHSPSIYSIIYSCGKLQTIKKIKIAIKFINDNKKKLNL.

The 'HIGH' region motif lies at proline 9 to serine 19. A 'KMSKS' region motif is present at residues lysine 237–lysine 241. Lysine 240 contacts ATP.

Belongs to the class-I aminoacyl-tRNA synthetase family. Glutamate--tRNA ligase type 1 subfamily. As to quaternary structure, monomer.

Its subcellular location is the cytoplasm. The catalysed reaction is tRNA(Glu) + L-glutamate + ATP = L-glutamyl-tRNA(Glu) + AMP + diphosphate. In terms of biological role, catalyzes the attachment of glutamate to tRNA(Glu) in a two-step reaction: glutamate is first activated by ATP to form Glu-AMP and then transferred to the acceptor end of tRNA(Glu). The chain is Glutamate--tRNA ligase from Wigglesworthia glossinidia brevipalpis.